Here is a 311-residue protein sequence, read N- to C-terminus: tRNA pseudouridine synthase B (311 aa).

The active-site Nucleophile is D49.

It belongs to the pseudouridine synthase TruB family. Type 1 subfamily.

It carries out the reaction uridine(55) in tRNA = pseudouridine(55) in tRNA. Responsible for synthesis of pseudouridine from uracil-55 in the psi GC loop of transfer RNAs. This Rhizobium meliloti (strain 1021) (Ensifer meliloti) protein is tRNA pseudouridine synthase B.